The following is a 687-amino-acid chain: Mitochondrial 15S rRNA processing factor ppr3 (687 aa).

The N-terminal 49 residues, 1-49, are a transit peptide targeting the mitochondrion; the sequence is MLNKCSGSLTLLAVRRFCGPCRRLHYHKDNPNNINIAKNLLNNNIQARC. 4 PPR repeats span residues 262–296, 297–331, 334–368, and 372–407; these read NGLVYQSYAIALSSLGKHKDLVALYSEQKSVSITP, SKDFLNACIKAFSRTKEFTKAWEVFNFMKFTATSI, SAETYGLMIQICSSQYNPEKALDLYNEMKLRPIDP, and TTFVINNLIHALATDVRFQTVAFSLLQDLSHYGLRP.

This sequence belongs to the CCM1 family. Binds to mitochondrial small subunit 15S rRNA.

It localises to the mitochondrion. In terms of biological role, regulates mitochondrial small subunit maturation by controlling 15S rRNA 5'-end processing. Localizes to the 5' precursor of the 15S rRNA in a position that is subsequently occupied by mS47 in the mature yeast mtSSU. Uses structure and sequence-specific RNA recognition, binding to a single-stranded region of the precursor and specifically recognizing bases -6 to -1. The exchange of Ccm1 for mS47 is coupled to the irreversible removal of precursor rRNA that is accompanied by conformational changes of the mitoribosomal proteins uS5m and mS26. These conformational changes signal completion of 5'-end rRNA processing through protection of the mature 5'-end of the 15S rRNA and stabilization of mS47. The removal of the 5' precursor together with the dissociation of Ccm1 may be catalyzed by the 5'-3' exoribonuclease Pet127. Involved in the specific removal of group I introns in mitochondrial encoded transcripts. This is Mitochondrial 15S rRNA processing factor ppr3 from Schizosaccharomyces pombe (strain 972 / ATCC 24843) (Fission yeast).